Here is a 673-residue protein sequence, read N- to C-terminus: DNA mismatch repair protein MutL (673 aa).

It belongs to the DNA mismatch repair MutL/HexB family.

This protein is involved in the repair of mismatches in DNA. It is required for dam-dependent methyl-directed DNA mismatch repair. May act as a 'molecular matchmaker', a protein that promotes the formation of a stable complex between two or more DNA-binding proteins in an ATP-dependent manner without itself being part of a final effector complex. The polypeptide is DNA mismatch repair protein MutL (Ehrlichia chaffeensis (strain ATCC CRL-10679 / Arkansas)).